Reading from the N-terminus, the 226-residue chain is ATP synthase F(0) complex subunit a (226 aa).

6 consecutive transmembrane segments (helical) span residues 6–26, 68–88, 97–117, 138–158, 164–184, and 195–215; these read FAPF…IITF, WTLM…LGLL, QLSM…IMGF, IPML…ALAV, ITAG…LSSI, and ILFL…YVFT.

The protein belongs to the ATPase A chain family. Component of the ATP synthase complex composed at least of ATP5F1A/subunit alpha, ATP5F1B/subunit beta, ATP5MC1/subunit c (homooctomer), MT-ATP6/subunit a, MT-ATP8/subunit 8, ATP5ME/subunit e, ATP5MF/subunit f, ATP5MG/subunit g, ATP5MK/subunit k, ATP5MJ/subunit j, ATP5F1C/subunit gamma, ATP5F1D/subunit delta, ATP5F1E/subunit epsilon, ATP5PF/subunit F6, ATP5PB/subunit b, ATP5PD/subunit d, ATP5PO/subunit OSCP. ATP synthase complex consists of a soluble F(1) head domain (subunits alpha(3) and beta(3)) - the catalytic core - and a membrane F(0) domain - the membrane proton channel (subunits c, a, 8, e, f, g, k and j). These two domains are linked by a central stalk (subunits gamma, delta, and epsilon) rotating inside the F1 region and a stationary peripheral stalk (subunits F6, b, d, and OSCP). Interacts with DNAJC30; interaction is direct.

The protein localises to the mitochondrion inner membrane. The catalysed reaction is H(+)(in) = H(+)(out). Its function is as follows. Subunit a, of the mitochondrial membrane ATP synthase complex (F(1)F(0) ATP synthase or Complex V) that produces ATP from ADP in the presence of a proton gradient across the membrane which is generated by electron transport complexes of the respiratory chain. ATP synthase complex consist of a soluble F(1) head domain - the catalytic core - and a membrane F(1) domain - the membrane proton channel. These two domains are linked by a central stalk rotating inside the F(1) region and a stationary peripheral stalk. During catalysis, ATP synthesis in the catalytic domain of F(1) is coupled via a rotary mechanism of the central stalk subunits to proton translocation. With the subunit c (ATP5MC1), forms the proton-conducting channel in the F(0) domain, that contains two crucial half-channels (inlet and outlet) that facilitate proton movement from the mitochondrial intermembrane space (IMS) into the matrix. Protons are taken up via the inlet half-channel and released through the outlet half-channel, following a Grotthuss mechanism. The protein is ATP synthase F(0) complex subunit a of Didelphis virginiana (North American opossum).